The sequence spans 84 residues: Large ribosomal subunit protein bL27 (84 aa).

This sequence belongs to the bacterial ribosomal protein bL27 family.

This Salinispora tropica (strain ATCC BAA-916 / DSM 44818 / JCM 13857 / NBRC 105044 / CNB-440) protein is Large ribosomal subunit protein bL27.